We begin with the raw amino-acid sequence, 1298 residues long: Phosphoribosylformylglycinamidine synthase (1298 aa).

Residues 303 to 327 (FPGAATGSGGEIRDEGATGRGAKPK) form a disordered region. ATP is bound by residues 305-316 (GAATGSGGEIRD), 384-386 (TGY), and alanine 676. The Mg(2+) site is built by aspartate 677, glutamate 716, asparagine 720, and aspartate 884. An ATP-binding site is contributed by serine 886. The Glutamine amidotransferase type-1 domain maps to 1045 to 1298 (VAVLREQGVN…MFRNARAWVN (254 aa)). Cysteine 1138 (nucleophile) is an active-site residue. Active-site residues include histidine 1263 and glutamate 1265.

It in the N-terminal section; belongs to the FGAMS family. As to quaternary structure, monomer.

Its subcellular location is the cytoplasm. The catalysed reaction is N(2)-formyl-N(1)-(5-phospho-beta-D-ribosyl)glycinamide + L-glutamine + ATP + H2O = 2-formamido-N(1)-(5-O-phospho-beta-D-ribosyl)acetamidine + L-glutamate + ADP + phosphate + H(+). It participates in purine metabolism; IMP biosynthesis via de novo pathway; 5-amino-1-(5-phospho-D-ribosyl)imidazole from N(2)-formyl-N(1)-(5-phospho-D-ribosyl)glycinamide: step 1/2. Functionally, phosphoribosylformylglycinamidine synthase involved in the purines biosynthetic pathway. Catalyzes the ATP-dependent conversion of formylglycinamide ribonucleotide (FGAR) and glutamine to yield formylglycinamidine ribonucleotide (FGAM) and glutamate. The protein is Phosphoribosylformylglycinamidine synthase of Pseudomonas syringae pv. tomato (strain ATCC BAA-871 / DC3000).